The primary structure comprises 159 residues: NADH-quinone oxidoreductase subunit B (159 aa).

[4Fe-4S] cluster-binding residues include Cys-36, Cys-37, Cys-102, and Cys-132.

It belongs to the complex I 20 kDa subunit family. In terms of assembly, NDH-1 is composed of 14 different subunits. Subunits NuoB, C, D, E, F, and G constitute the peripheral sector of the complex. Requires [4Fe-4S] cluster as cofactor.

The protein resides in the cell inner membrane. It carries out the reaction a quinone + NADH + 5 H(+)(in) = a quinol + NAD(+) + 4 H(+)(out). Its function is as follows. NDH-1 shuttles electrons from NADH, via FMN and iron-sulfur (Fe-S) centers, to quinones in the respiratory chain. Couples the redox reaction to proton translocation (for every two electrons transferred, four hydrogen ions are translocated across the cytoplasmic membrane), and thus conserves the redox energy in a proton gradient. The chain is NADH-quinone oxidoreductase subunit B from Verminephrobacter eiseniae (strain EF01-2).